A 267-amino-acid polypeptide reads, in one-letter code: MSEQFLTFPNIDPVALQLGPVSLHWYGIMYLLGFGFAYWLGTKRAKNSNGVWSVEQVDQLLFNGFWGVVLGGRIGDVFFYSFDRFLQDPLYLFRIWEGGMSFHGGLLGVIVAMLWTSRRQNRNFWQTADFIAPLIPFGLGLGRIGNFINDELWGRVTDVPWAIMFPSGGYLPRHPSQLYEAVLEGLVLFFILNGYIRKPRPTGSVAGLFLVGYGVFRFIVEYFREFDPNVNTAADLITRGQLLSLPMIIGGLVIMVVAYYRHRLSND.

The next 3 helical transmembrane spans lie at 21–41 (VSLHWYGIMYLLGFGFAYWLG), 60–80 (LLFNGFWGVVLGGRIGDVFFY), and 95–115 (IWEGGMSFHGGLLGVIVAMLW). Arg143 contacts a 1,2-diacyl-sn-glycero-3-phospho-(1'-sn-glycerol). 2 consecutive transmembrane segments (helical) span residues 203–223 (GSVAGLFLVGYGVFRFIVEYF) and 240–260 (GQLLSLPMIIGGLVIMVVAYY).

It belongs to the Lgt family.

Its subcellular location is the cell inner membrane. It catalyses the reaction L-cysteinyl-[prolipoprotein] + a 1,2-diacyl-sn-glycero-3-phospho-(1'-sn-glycerol) = an S-1,2-diacyl-sn-glyceryl-L-cysteinyl-[prolipoprotein] + sn-glycerol 1-phosphate + H(+). The protein operates within protein modification; lipoprotein biosynthesis (diacylglyceryl transfer). Functionally, catalyzes the transfer of the diacylglyceryl group from phosphatidylglycerol to the sulfhydryl group of the N-terminal cysteine of a prolipoprotein, the first step in the formation of mature lipoproteins. The chain is Phosphatidylglycerol--prolipoprotein diacylglyceryl transferase from Glaesserella parasuis serovar 5 (strain SH0165) (Haemophilus parasuis).